Here is a 249-residue protein sequence, read N- to C-terminus: MSSVNVDFEQAGELKIGQVGIANLRIRTLDVPRLVREMQDRVTRAPKLFGRAAVILDFGGLAQAPDLATAKALLDGLRSAGVLPVALAYGTSEIDLLSQQLGIPLLAKFRAQYETAAVRPPQPPPPPHARAEPAAPVARPAPVRMQRNTVRSGQQLYAENCDLTVLSTVGAGAEVIADGSIHIYGTLRGRALAGAQGNPDARIFCRDFHAELVAIAGHYKVLDDVPMDLRGKAVQVWLEQDQIKIAALD.

Residues 117 to 138 form a disordered region; it reads AVRPPQPPPPPHARAEPAAPVA.

Belongs to the MinC family. Interacts with MinD and FtsZ.

Functionally, cell division inhibitor that blocks the formation of polar Z ring septums. Rapidly oscillates between the poles of the cell to destabilize FtsZ filaments that have formed before they mature into polar Z rings. Prevents FtsZ polymerization. In Xanthomonas campestris pv. campestris (strain 8004), this protein is Probable septum site-determining protein MinC.